Consider the following 35-residue polypeptide: Photosystem II reaction center protein M (35 aa).

A helical transmembrane segment spans residues 5–25 (ILAVIATALFIIIPTSFLLIL).

The protein belongs to the PsbM family. In terms of assembly, PSII is composed of 1 copy each of membrane proteins PsbA, PsbB, PsbC, PsbD, PsbE, PsbF, PsbH, PsbI, PsbJ, PsbK, PsbL, PsbM, PsbT, PsbX, PsbY, PsbZ, Psb30/Ycf12, at least 3 peripheral proteins of the oxygen-evolving complex and a large number of cofactors. It forms dimeric complexes.

It localises to the plastid. The protein localises to the chloroplast thylakoid membrane. Its function is as follows. One of the components of the core complex of photosystem II (PSII). PSII is a light-driven water:plastoquinone oxidoreductase that uses light energy to abstract electrons from H(2)O, generating O(2) and a proton gradient subsequently used for ATP formation. It consists of a core antenna complex that captures photons, and an electron transfer chain that converts photonic excitation into a charge separation. This subunit is found at the monomer-monomer interface. In Staurastrum punctulatum (Green alga), this protein is Photosystem II reaction center protein M.